The following is a 142-amino-acid chain: ATP synthase epsilon chain, chloroplastic (142 aa).

Belongs to the ATPase epsilon chain family. F-type ATPases have 2 components, CF(1) - the catalytic core - and CF(0) - the membrane proton channel. CF(1) has five subunits: alpha(3), beta(3), gamma(1), delta(1), epsilon(1). CF(0) has three main subunits: a, b and c.

It is found in the plastid. It localises to the chloroplast thylakoid membrane. In terms of biological role, produces ATP from ADP in the presence of a proton gradient across the membrane. The protein is ATP synthase epsilon chain, chloroplastic of Ostreococcus tauri.